Here is a 50-residue protein sequence, read N- to C-terminus: Small ribosomal subunit protein uS14 (50 aa).

Zn(2+) is bound by residues C15, C18, C33, and C36.

Belongs to the universal ribosomal protein uS14 family. Zinc-binding uS14 subfamily. Part of the 30S ribosomal subunit. Requires Zn(2+) as cofactor.

Its function is as follows. Binds 16S rRNA, required for the assembly of 30S particles. The chain is Small ribosomal subunit protein uS14 from Methanothermobacter thermautotrophicus (strain ATCC 29096 / DSM 1053 / JCM 10044 / NBRC 100330 / Delta H) (Methanobacterium thermoautotrophicum).